Consider the following 176-residue polypeptide: Ribosome rescue factor SmrB (176 aa).

The Smr domain occupies 93–168 (LDLHGYRQSE…GDAALLVLID (76 aa)).

The protein belongs to the SmrB family. As to quaternary structure, associates with collided ribosomes, but not with correctly translating polysomes.

Functionally, acts as a ribosome collision sensor. Detects stalled/collided disomes (pairs of ribosomes where the leading ribosome is stalled and a second ribosome has collided with it) and endonucleolytically cleaves mRNA at the 5' boundary of the stalled ribosome. Stalled/collided disomes form a new interface (primarily via the 30S subunits) that binds SmrB. Cleaved mRNA becomes available for tmRNA ligation, leading to ribosomal subunit dissociation and rescue of stalled ribosomes. The sequence is that of Ribosome rescue factor SmrB from Shewanella baltica (strain OS155 / ATCC BAA-1091).